An 888-amino-acid polypeptide reads, in one-letter code: Microtubule-associated protein 10 (888 aa).

Disordered stretches follow at residues 398-454 (EHKG…VTKG), 508-602 (SLAA…TSLR), 620-642 (NILR…DPAV), 654-683 (QVKA…ELQC), and 699-836 (TENN…YEPS). Residues 524-541 (LTDSNGKVSSWAVQSQLP) show a composition bias toward polar residues. The span at 572-589 (ESSRTREAKQSHAMKKET) shows a compositional bias: basic and acidic residues. Positions 590 to 600 (VGQSENKTVTS) are enriched in polar residues. Polar residues-rich tracts occupy residues 661–683 (ADTN…ELQC), 699–714 (TENN…SSTG), 722–745 (SWAS…SSVF), 772–786 (EASS…SQWT), and 825–836 (ARTSQVSSYEPS).

As to quaternary structure, interacts (via middle region) with microtubules.

It localises to the cytoplasm. The protein resides in the cytoskeleton. Its subcellular location is the spindle pole. It is found in the microtubule organizing center. The protein localises to the centrosome. It localises to the midbody. Its function is as follows. Microtubule-associated protein (MAP) that plays a role in the regulation of cell division; promotes microtubule stability and participates in the organization of the spindle midzone and normal progress of cytokinesis. The polypeptide is Microtubule-associated protein 10 (Map10) (Rattus norvegicus (Rat)).